Here is a 339-residue protein sequence, read N- to C-terminus: MKESLLAKSVRIAAVVAAYWTISISLVFLNKYLLSSPDIKLDAPLFVTWYQCVVTVICLFFLSLLGDRYPWIDTFPAFHIKLSVAKQVLPLSAVFVGMITFNNLCLKNLGVSFYNVGRSLTTVFNVICTYVILGQSTSYKAVICCAVIIGGFLMGVDQEGSSGKISYSGVLFGVLASLCVSLNAIYTKKFIPAVDNNIWRLQLYNNFNACFLFLPLMALLGEIGEVAHFPNLSSAYFWLMMTIGGVFGIAIGYITGLQIKVTSPLTHNISGTAKACVQTIMSVSYFHETKTALWWLSNAMVLGGSMAYTRVRHSEMKKAHTIQASKDDKALQEDGQTKV.

A run of 8 helical transmembrane segments spans residues S9–L29, L45–L65, L82–N102, V111–L133, S136–V156, I165–I185, A209–F229, and F237–L257. The segment at A319–V339 is disordered. Basic and acidic residues predominate over residues S325–V339.

This sequence belongs to the TPT transporter family. SLC35C subfamily.

The protein localises to the golgi apparatus membrane. The catalysed reaction is GMP(out) + GDP-beta-L-fucose(in) = GMP(in) + GDP-beta-L-fucose(out). In terms of biological role, antiporter specific for GDP-l-fucose and depending on the concomitant reverse transport of GMP. Involved in GDP-fucose import from the cytoplasm into the Golgi lumen. This chain is GDP-fucose transporter 1 (slc35c1), found in Nematostella vectensis (Starlet sea anemone).